We begin with the raw amino-acid sequence, 237 residues long: MEKRDELYRGKAKTVYYTDDSDKLILHFRNDTSAFDGEKIEQLDRKGEVNNKFNHFIMTKLEEAGVATQVEALISDTESLVKKLDMIPVECVVRNLSAGSLVRRLGVEEGQALNPPIFEFFLKNDALHDPMVNDYHILSFGWATQEQIAEMKALTFKVNNVLKALFDDAGMLLVDYKLEFGVDKDGNIVLGDEFTPDGCRLWDKETRKKMDKDRFRQGLGSVVETYIEVAERLGLSL.

This sequence belongs to the SAICAR synthetase family.

It catalyses the reaction 5-amino-1-(5-phospho-D-ribosyl)imidazole-4-carboxylate + L-aspartate + ATP = (2S)-2-[5-amino-1-(5-phospho-beta-D-ribosyl)imidazole-4-carboxamido]succinate + ADP + phosphate + 2 H(+). Its pathway is purine metabolism; IMP biosynthesis via de novo pathway; 5-amino-1-(5-phospho-D-ribosyl)imidazole-4-carboxamide from 5-amino-1-(5-phospho-D-ribosyl)imidazole-4-carboxylate: step 1/2. This chain is Phosphoribosylaminoimidazole-succinocarboxamide synthase, found in Alteromonas mediterranea (strain DSM 17117 / CIP 110805 / LMG 28347 / Deep ecotype).